The following is a 362-amino-acid chain: Ribosome-binding ATPase YchF (362 aa).

The OBG-type G domain maps to Leu-2 to Leu-258. Asn-11–Thr-16 provides a ligand contact to ATP. Residues Ser-15 and Thr-35 each coordinate Mg(2+). A TGS domain is found at Gly-281–Leu-347.

Belongs to the TRAFAC class OBG-HflX-like GTPase superfamily. OBG GTPase family. YchF/OLA1 subfamily. Mg(2+) serves as cofactor.

ATPase that binds to both the 70S ribosome and the 50S ribosomal subunit in a nucleotide-independent manner. This chain is Ribosome-binding ATPase YchF, found in Mycoplasma pneumoniae (strain ATCC 29342 / M129 / Subtype 1) (Mycoplasmoides pneumoniae).